The following is a 517-amino-acid chain: MAGGVIVANDGDGSAVDHGGRLTFSVVITCLVAASGGLIFGYDVGISGGVSTMEPFLRRFFPGVVRRMAEARPGNEYCVYDSQALTAFTSSLYVAGLVASLVASRVTRAMGRQAVMVMGGALFFAGGAVTGFAVNIAMLIVGRMLLGFGVGFTNQAAPLFLAEMAPTRWRGSLTAGFQFFLAVGVVIATVTNYFASRVPWGWRLSLGLAGAPAVVIFLGALFLTDTPSSLVMRGDTARARAALLRVRGAGADVEAELKGIVRAVEVARQGEDGAFRRMAARREYRPYLVFAVAMPMFFQLTGVIVISFFSPLVFRTVGFGSNAALMGNVILGAVNLVCLMLSTLVIDRYGRKVLFMVGGAIMIIAQVGVAWIMGAQVGKNGSEAMARPYAVAVVAFTCLHTAGFGWSWGPLGWVIPGEIFPVDIRSAGQAMNVSIGLGLTFVQTQSFLAMLCRFRYGTFAYYAAWVAVMTVFIAVFLPETKGVPLESMATVWARHWYWKRFAREQPKTSADEPTGTY.

The Cytoplasmic segment spans residues 1–25; that stretch reads MAGGVIVANDGDGSAVDHGGRLTFS. A helical transmembrane segment spans residues 26 to 46; that stretch reads VVITCLVAASGGLIFGYDVGI. Residues 47 to 83 are Extracellular-facing; that stretch reads SGGVSTMEPFLRRFFPGVVRRMAEARPGNEYCVYDSQ. A helical membrane pass occupies residues 84–104; sequence ALTAFTSSLYVAGLVASLVAS. Over 105–120 the chain is Cytoplasmic; that stretch reads RVTRAMGRQAVMVMGG. The helical transmembrane segment at 121 to 141 threads the bilayer; sequence ALFFAGGAVTGFAVNIAMLIV. The Extracellular portion of the chain corresponds to 142-143; sequence GR. The chain crosses the membrane as a helical span at residues 144–164; sequence MLLGFGVGFTNQAAPLFLAEM. Residues 165 to 170 are Cytoplasmic-facing; it reads APTRWR. A helical membrane pass occupies residues 171–191; it reads GSLTAGFQFFLAVGVVIATVT. The Extracellular segment spans residues 192–203; sequence NYFASRVPWGWR. Residues 204-224 form a helical membrane-spanning segment; sequence LSLGLAGAPAVVIFLGALFLT. The Cytoplasmic segment spans residues 225–288; it reads DTPSSLVMRG…AARREYRPYL (64 aa). A helical transmembrane segment spans residues 289-309; sequence VFAVAMPMFFQLTGVIVISFF. Topologically, residues 310–325 are extracellular; it reads SPLVFRTVGFGSNAAL. A helical transmembrane segment spans residues 326–346; it reads MGNVILGAVNLVCLMLSTLVI. The Cytoplasmic portion of the chain corresponds to 347-352; the sequence is DRYGRK. The helical transmembrane segment at 353 to 373 threads the bilayer; the sequence is VLFMVGGAIMIIAQVGVAWIM. Over 374–389 the chain is Extracellular; it reads GAQVGKNGSEAMARPY. The chain crosses the membrane as a helical span at residues 390-410; that stretch reads AVAVVAFTCLHTAGFGWSWGP. At 411–430 the chain is on the cytoplasmic side; that stretch reads LGWVIPGEIFPVDIRSAGQA. The chain crosses the membrane as a helical span at residues 431–451; that stretch reads MNVSIGLGLTFVQTQSFLAML. The Extracellular portion of the chain corresponds to 452–456; it reads CRFRY. Residues 457–477 form a helical membrane-spanning segment; that stretch reads GTFAYYAAWVAVMTVFIAVFL. At 478–517 the chain is on the cytoplasmic side; that stretch reads PETKGVPLESMATVWARHWYWKRFAREQPKTSADEPTGTY.

This sequence belongs to the major facilitator superfamily. Sugar transporter (TC 2.A.1.1) family.

Its subcellular location is the membrane. In terms of biological role, mediates active uptake of hexoses by sugar:proton symport. The sequence is that of Sugar transport protein MST1 from Oryza sativa subsp. japonica (Rice).